Consider the following 734-residue polypeptide: E3 ubiquitin-protein ligase TRIM56 (734 aa).

The RING-type zinc finger occupies 21–60; it reads CKICLEQLHTPKTLPCLHTYCQDCLAQLDIGGQVRCPECR. 2 B box-type zinc fingers span residues 98-149 and 164-205; these read KPTC…VVDL and RQAS…CLPL. Zn(2+) is bound by residues cysteine 169, histidine 172, cysteine 192, and histidine 197. The stretch at 215–303 forms a coiled coil; sequence GLEELLAGVD…KIERQEQVAK (89 aa). Residues 372 to 381 show a composition bias toward basic and acidic residues; sequence EPKQSPKDSG. The interval 372 to 463 is disordered; sequence EPKQSPKDSG…SPILRPNLEG (92 aa). Positions 435-448 are enriched in basic residues; sequence RPNKKKKCKGRGKS. At serine 454 the chain carries Phosphoserine.

The protein belongs to the TRIM/RBCC family. In terms of assembly, interacts with STING1. Interacts with TICAM1.

The protein localises to the cytoplasm. It carries out the reaction S-ubiquitinyl-[E2 ubiquitin-conjugating enzyme]-L-cysteine + [acceptor protein]-L-lysine = [E2 ubiquitin-conjugating enzyme]-L-cysteine + N(6)-ubiquitinyl-[acceptor protein]-L-lysine.. It participates in protein modification; protein ubiquitination. Functionally, E3 ubiquitin-protein ligase that plays a key role in innate antiviral immunity by mediating ubiquitination of CGAS and STING1. In response to pathogen- and host-derived double-stranded DNA (dsDNA), targets STING1 to 'Lys-63'-linked ubiquitination, thereby promoting its homodimerization, a step required for the production of type I interferon IFN-beta. Also mediates monoubiquitination of CGAS, thereby promoting CGAS oligomerization and subsequent activation. Independently of its E3 ubiquitin ligase activity, positive regulator of TLR3 signaling. Potentiates extracellular double stranded RNA (dsRNA)-induced expression of IFNB1 and interferon-stimulated genes ISG15, IFIT1/ISG56, CXCL10, OASL and CCL5/RANTES. This Mus musculus (Mouse) protein is E3 ubiquitin-protein ligase TRIM56.